A 361-amino-acid polypeptide reads, in one-letter code: Chorismate synthase (361 aa).

NADP(+) contacts are provided by arginine 48 and arginine 54. FMN contacts are provided by residues arginine 125–serine 127, asparagine 238–alanine 239, glycine 278, lysine 293–serine 297, and arginine 319.

Belongs to the chorismate synthase family. Homotetramer. Requires FMNH2 as cofactor.

The enzyme catalyses 5-O-(1-carboxyvinyl)-3-phosphoshikimate = chorismate + phosphate. The protein operates within metabolic intermediate biosynthesis; chorismate biosynthesis; chorismate from D-erythrose 4-phosphate and phosphoenolpyruvate: step 7/7. Its function is as follows. Catalyzes the anti-1,4-elimination of the C-3 phosphate and the C-6 proR hydrogen from 5-enolpyruvylshikimate-3-phosphate (EPSP) to yield chorismate, which is the branch point compound that serves as the starting substrate for the three terminal pathways of aromatic amino acid biosynthesis. This reaction introduces a second double bond into the aromatic ring system. The sequence is that of Chorismate synthase from Escherichia coli O157:H7.